Here is a 120-residue protein sequence, read N- to C-terminus: Large ribosomal subunit protein uL18 (120 aa).

Belongs to the universal ribosomal protein uL18 family. In terms of assembly, part of the 50S ribosomal subunit; part of the 5S rRNA/L5/L18/L25 subcomplex. Contacts the 5S and 23S rRNAs.

This is one of the proteins that bind and probably mediate the attachment of the 5S RNA into the large ribosomal subunit, where it forms part of the central protuberance. The sequence is that of Large ribosomal subunit protein uL18 from Finegoldia magna (strain ATCC 29328 / DSM 20472 / WAL 2508) (Peptostreptococcus magnus).